We begin with the raw amino-acid sequence, 40 residues long: Photosystem II reaction center protein J (40 aa).

A helical transmembrane segment spans residues 8-28; it reads IPLWLIGTVAGIAVIGLVGVF.

The protein belongs to the PsbJ family. As to quaternary structure, PSII is composed of 1 copy each of membrane proteins PsbA, PsbB, PsbC, PsbD, PsbE, PsbF, PsbH, PsbI, PsbJ, PsbK, PsbL, PsbM, PsbT, PsbX, PsbY, PsbZ, Psb30/Ycf12, at least 3 peripheral proteins of the oxygen-evolving complex and a large number of cofactors. It forms dimeric complexes.

The protein localises to the plastid. It is found in the chloroplast thylakoid membrane. Functionally, one of the components of the core complex of photosystem II (PSII). PSII is a light-driven water:plastoquinone oxidoreductase that uses light energy to abstract electrons from H(2)O, generating O(2) and a proton gradient subsequently used for ATP formation. It consists of a core antenna complex that captures photons, and an electron transfer chain that converts photonic excitation into a charge separation. The polypeptide is Photosystem II reaction center protein J (Secale cereale (Rye)).